We begin with the raw amino-acid sequence, 241 residues long: Carboxy-S-adenosyl-L-methionine synthase (241 aa).

Residues Y38, 63 to 65, 88 to 89, 116 to 117, N131, and R198 each bind S-adenosyl-L-methionine; these read GCS, DN, and DI.

It belongs to the class I-like SAM-binding methyltransferase superfamily. Cx-SAM synthase family. Homodimer.

It carries out the reaction prephenate + S-adenosyl-L-methionine = carboxy-S-adenosyl-L-methionine + 3-phenylpyruvate + H2O. Functionally, catalyzes the conversion of S-adenosyl-L-methionine (SAM) to carboxy-S-adenosyl-L-methionine (Cx-SAM). In Histophilus somni (strain 129Pt) (Haemophilus somnus), this protein is Carboxy-S-adenosyl-L-methionine synthase.